The primary structure comprises 149 residues: D-aminoacyl-tRNA deacylase (149 aa).

The Gly-cisPro motif, important for rejection of L-amino acids signature appears at 137-138; sequence GP.

This sequence belongs to the DTD family. As to quaternary structure, homodimer.

It localises to the cytoplasm. The catalysed reaction is glycyl-tRNA(Ala) + H2O = tRNA(Ala) + glycine + H(+). It catalyses the reaction a D-aminoacyl-tRNA + H2O = a tRNA + a D-alpha-amino acid + H(+). Its function is as follows. An aminoacyl-tRNA editing enzyme that deacylates mischarged D-aminoacyl-tRNAs. Also deacylates mischarged glycyl-tRNA(Ala), protecting cells against glycine mischarging by AlaRS. Acts via tRNA-based rather than protein-based catalysis; rejects L-amino acids rather than detecting D-amino acids in the active site. By recycling D-aminoacyl-tRNA to D-amino acids and free tRNA molecules, this enzyme counteracts the toxicity associated with the formation of D-aminoacyl-tRNA entities in vivo and helps enforce protein L-homochirality. This Clostridioides difficile (strain 630) (Peptoclostridium difficile) protein is D-aminoacyl-tRNA deacylase.